A 230-amino-acid polypeptide reads, in one-letter code: Endonuclease NucS (230 aa).

It belongs to the NucS endonuclease family.

The protein resides in the cytoplasm. In terms of biological role, cleaves both 3' and 5' ssDNA extremities of branched DNA structures. The sequence is that of Endonuclease NucS from Corynebacterium glutamicum (strain R).